We begin with the raw amino-acid sequence, 463 residues long: Glycine--tRNA ligase (463 aa).

Arg100 and Glu175 together coordinate substrate. ATP is bound by residues 207–209 (RNE), 217–222 (FRTREF), 291–292 (EL), and 335–338 (GADR). 222 to 226 (FEQME) lines the substrate pocket. 331 to 335 (EPSLG) lines the substrate pocket.

Belongs to the class-II aminoacyl-tRNA synthetase family. In terms of assembly, homodimer.

The protein localises to the cytoplasm. The enzyme catalyses tRNA(Gly) + glycine + ATP = glycyl-tRNA(Gly) + AMP + diphosphate. Catalyzes the attachment of glycine to tRNA(Gly). The polypeptide is Glycine--tRNA ligase (Clostridium tetani (strain Massachusetts / E88)).